The following is a 243-amino-acid chain: Pyridoxine 5'-phosphate synthase (243 aa).

Asparagine 9 lines the 3-amino-2-oxopropyl phosphate pocket. Residue 11 to 12 (DH) participates in 1-deoxy-D-xylulose 5-phosphate binding. 3-amino-2-oxopropyl phosphate is bound at residue arginine 20. The active-site Proton acceptor is the histidine 45. 1-deoxy-D-xylulose 5-phosphate contacts are provided by arginine 47 and histidine 52. Glutamate 72 functions as the Proton acceptor in the catalytic mechanism. A 1-deoxy-D-xylulose 5-phosphate-binding site is contributed by threonine 102. Histidine 193 acts as the Proton donor in catalysis. 3-amino-2-oxopropyl phosphate is bound by residues glycine 194 and 215–216 (GH).

Belongs to the PNP synthase family. As to quaternary structure, homooctamer; tetramer of dimers.

It is found in the cytoplasm. The catalysed reaction is 3-amino-2-oxopropyl phosphate + 1-deoxy-D-xylulose 5-phosphate = pyridoxine 5'-phosphate + phosphate + 2 H2O + H(+). It functions in the pathway cofactor biosynthesis; pyridoxine 5'-phosphate biosynthesis; pyridoxine 5'-phosphate from D-erythrose 4-phosphate: step 5/5. Functionally, catalyzes the complicated ring closure reaction between the two acyclic compounds 1-deoxy-D-xylulose-5-phosphate (DXP) and 3-amino-2-oxopropyl phosphate (1-amino-acetone-3-phosphate or AAP) to form pyridoxine 5'-phosphate (PNP) and inorganic phosphate. This is Pyridoxine 5'-phosphate synthase from Pectobacterium atrosepticum (strain SCRI 1043 / ATCC BAA-672) (Erwinia carotovora subsp. atroseptica).